The chain runs to 305 residues: HTH-type transcriptional regulator KdgR (305 aa).

Residues 55 to 116 (VSSVLKVFGI…GESEKYSLTL (62 aa)) enclose the HTH iclR-type domain. Residues 76–95 (ITELSQRVMMSKSTVYRFLQ) constitute a DNA-binding region (H-T-H motif). The IclR-ED domain occupies 131-300 (LIRSADIQMR…ARNISDQMGY (170 aa)).

In terms of assembly, homodimer.

It localises to the cytoplasm. Its function is as follows. Transcriptional repressor that negatively regulates the expression of genes involved in pectinolysis and in pectinase secretion. Controls genes involved in pectin catabolism, including the pectinase genes (pelA, pelB, pelC, pelE), genes involved in pectin catabolism (kdgT, ogl, kduI-kdgF) and the outT gene involved in pectinase secretion. Acts by binding directly to KdgR binding sites (KdgR-box) in the gene operator/promoter region. The polypeptide is HTH-type transcriptional regulator KdgR (Dickeya chrysanthemi (Pectobacterium chrysanthemi)).